The following is a 526-amino-acid chain: Glutamyl-tRNA(Gln) amidotransferase subunit A, mitochondrial (526 aa).

Residue lysine 76 is the Charge relay system of the active site. The tract at residues 147-166 (QYREKRKQNSHSENEDSNWL) is disordered. Serine 171 functions as the Charge relay system in the catalytic mechanism. Residue serine 195 is the Acyl-ester intermediate of the active site.

The protein belongs to the amidase family. GatA subfamily. As to quaternary structure, subunit of the heterotrimeric GatCAB amidotransferase (AdT) complex, composed of A (QRSL1), B (GATB) and C (GATC) subunits.

It localises to the mitochondrion. It carries out the reaction L-glutamyl-tRNA(Gln) + L-glutamine + ATP + H2O = L-glutaminyl-tRNA(Gln) + L-glutamate + ADP + phosphate + H(+). Its function is as follows. Allows the formation of correctly charged Gln-tRNA(Gln) through the transamidation of misacylated Glu-tRNA(Gln) in the mitochondria. The reaction takes place in the presence of glutamine and ATP through an activated gamma-phospho-Glu-tRNA(Gln). The sequence is that of Glutamyl-tRNA(Gln) amidotransferase subunit A, mitochondrial from Bos taurus (Bovine).